The chain runs to 232 residues: Orotate phosphoribosyltransferase (232 aa).

5-phospho-alpha-D-ribose 1-diphosphate contacts are provided by residues Arg-107, Lys-108, Lys-111, His-113, and 133–141 (EDLTTAGGS). Residue Thr-137 coordinates orotate.

Belongs to the purine/pyrimidine phosphoribosyltransferase family. PyrE subfamily. In terms of assembly, homodimer. The cofactor is Mg(2+).

It catalyses the reaction orotidine 5'-phosphate + diphosphate = orotate + 5-phospho-alpha-D-ribose 1-diphosphate. Its pathway is pyrimidine metabolism; UMP biosynthesis via de novo pathway; UMP from orotate: step 1/2. Catalyzes the transfer of a ribosyl phosphate group from 5-phosphoribose 1-diphosphate to orotate, leading to the formation of orotidine monophosphate (OMP). The chain is Orotate phosphoribosyltransferase from Sinorhizobium medicae (strain WSM419) (Ensifer medicae).